The chain runs to 187 residues: Large ribosomal subunit protein uL13 (187 aa).

The protein belongs to the universal ribosomal protein uL13 family. As to quaternary structure, part of the 50S ribosomal subunit.

This protein is one of the early assembly proteins of the 50S ribosomal subunit, although it is not seen to bind rRNA by itself. It is important during the early stages of 50S assembly. This is Large ribosomal subunit protein uL13 from Pyrobaculum aerophilum (strain ATCC 51768 / DSM 7523 / JCM 9630 / CIP 104966 / NBRC 100827 / IM2).